The chain runs to 150 residues: Large ribosomal subunit protein uL11 (150 aa).

It belongs to the universal ribosomal protein uL11 family. Part of the ribosomal stalk of the 50S ribosomal subunit. Interacts with L10 and the large rRNA to form the base of the stalk. L10 forms an elongated spine to which L12 dimers bind in a sequential fashion forming a multimeric L10(L12)X complex. In terms of processing, one or more lysine residues are methylated.

Functionally, forms part of the ribosomal stalk which helps the ribosome interact with GTP-bound translation factors. The sequence is that of Large ribosomal subunit protein uL11 from Cereibacter sphaeroides (strain KD131 / KCTC 12085) (Rhodobacter sphaeroides).